Reading from the N-terminus, the 189-residue chain is GMP synthase [glutamine-hydrolyzing] subunit A (189 aa).

The 185-residue stretch at 5-189 (KILVVNNYGQ…TNFFEVCDRY (185 aa)) folds into the Glutamine amidotransferase type-1 domain. Residue Cys79 is the Nucleophile of the active site. Residues His166 and Glu168 contribute to the active site.

As to quaternary structure, heterodimer composed of a glutamine amidotransferase subunit (A) and a GMP-binding subunit (B).

It carries out the reaction XMP + L-glutamine + ATP + H2O = GMP + L-glutamate + AMP + diphosphate + 2 H(+). Its pathway is purine metabolism; GMP biosynthesis; GMP from XMP (L-Gln route): step 1/1. Functionally, catalyzes the synthesis of GMP from XMP. In Methanosarcina acetivorans (strain ATCC 35395 / DSM 2834 / JCM 12185 / C2A), this protein is GMP synthase [glutamine-hydrolyzing] subunit A.